The chain runs to 431 residues: Citrate synthase (431 aa).

Catalysis depends on residues His-306 and Asp-364.

It belongs to the citrate synthase family.

The enzyme catalyses oxaloacetate + acetyl-CoA + H2O = citrate + CoA + H(+). It functions in the pathway carbohydrate metabolism; tricarboxylic acid cycle; isocitrate from oxaloacetate: step 1/2. This Bartonella henselae (strain ATCC 49882 / DSM 28221 / CCUG 30454 / Houston 1) (Rochalimaea henselae) protein is Citrate synthase (gltA).